A 117-amino-acid polypeptide reads, in one-letter code: Large-conductance mechanosensitive channel (117 aa).

Transmembrane regions (helical) follow at residues 7 to 27, 30 to 50, and 64 to 84; these read EFAL…GAAF, IVTS…FGSV, and GLFI…FIFV.

The protein belongs to the MscL family. In terms of assembly, homopentamer.

It is found in the cell membrane. Functionally, channel that opens in response to stretch forces in the membrane lipid bilayer. May participate in the regulation of osmotic pressure changes within the cell. This Staphylococcus haemolyticus (strain JCSC1435) protein is Large-conductance mechanosensitive channel.